A 279-amino-acid polypeptide reads, in one-letter code: tRNA pseudouridine synthase A (279 aa).

The active-site Nucleophile is aspartate 54. Substrate is bound at residue tyrosine 112.

It belongs to the tRNA pseudouridine synthase TruA family. In terms of assembly, homodimer.

The enzyme catalyses uridine(38/39/40) in tRNA = pseudouridine(38/39/40) in tRNA. Its function is as follows. Formation of pseudouridine at positions 38, 39 and 40 in the anticodon stem and loop of transfer RNAs. This chain is tRNA pseudouridine synthase A, found in Cutibacterium acnes (strain DSM 16379 / KPA171202) (Propionibacterium acnes).